Here is a 211-residue protein sequence, read N- to C-terminus: MIGIIDYGRGNLRSVEKALWKLGYPAKVLESPAELMAVKGIILPGVGAFADAMAALEEKGWIQPLIHYAHSGMPFLGICLGMQVLFEVGEEHGEHKGLGLLPGRVVRFPAGRKIPHMGWNTLHQEKPCRLLEGIPDEAYFYFVHSYYVASEEQEILAGMSDYGVPFPALVGRDNVWGAQFHPEKSSPWGLKLLENFGKWVNEDATVSSHRS.

The Glutamine amidotransferase type-1 domain occupies Met1 to Val206. Cys79 acts as the Nucleophile in catalysis. Residues His181 and Glu183 contribute to the active site.

In terms of assembly, heterodimer of HisH and HisF.

The protein resides in the cytoplasm. The catalysed reaction is 5-[(5-phospho-1-deoxy-D-ribulos-1-ylimino)methylamino]-1-(5-phospho-beta-D-ribosyl)imidazole-4-carboxamide + L-glutamine = D-erythro-1-(imidazol-4-yl)glycerol 3-phosphate + 5-amino-1-(5-phospho-beta-D-ribosyl)imidazole-4-carboxamide + L-glutamate + H(+). It catalyses the reaction L-glutamine + H2O = L-glutamate + NH4(+). Its pathway is amino-acid biosynthesis; L-histidine biosynthesis; L-histidine from 5-phospho-alpha-D-ribose 1-diphosphate: step 5/9. IGPS catalyzes the conversion of PRFAR and glutamine to IGP, AICAR and glutamate. The HisH subunit catalyzes the hydrolysis of glutamine to glutamate and ammonia as part of the synthesis of IGP and AICAR. The resulting ammonia molecule is channeled to the active site of HisF. The sequence is that of Imidazole glycerol phosphate synthase subunit HisH from Desulfitobacterium hafniense (strain Y51).